Here is a 411-residue protein sequence, read N- to C-terminus: Probable indole-3-pyruvate monooxygenase YUCCA4 (411 aa).

FAD is bound at residue 21–26 (GAGPSG). Residue 183-188 (GCGNSG) coordinates NADP(+).

It belongs to the FMO family. It depends on FAD as a cofactor. Expressed in leaves, stems, flowers, buds and siliques. Detected in the apical gynoecium and in the developing ovules.

The protein localises to the cytoplasm. It is found in the endoplasmic reticulum membrane. The catalysed reaction is indole-3-pyruvate + NADPH + O2 + H(+) = (indol-3-yl)acetate + CO2 + NADP(+) + H2O. It functions in the pathway plant hormone metabolism; auxin biosynthesis. Functionally, involved in auxin biosynthesis. Both isoforms are catalitically active. Involved during embryogenesis and seedling development. Required for the formation of floral organs and vascular tissues. Belongs to the set of redundant YUCCA genes probably responsible for auxin biosynthesis in shoots. This Arabidopsis thaliana (Mouse-ear cress) protein is Probable indole-3-pyruvate monooxygenase YUCCA4 (YUC4).